A 236-amino-acid polypeptide reads, in one-letter code: CD81 antigen (236 aa).

At 1–12 the chain is on the cytoplasmic side; that stretch reads MGVEGCTKCIKY. Residues 13-33 traverse the membrane as a helical segment; that stretch reads LLFVFNFVFWLAGGVILGVAL. Residues 34 to 63 are Extracellular-facing; sequence WLRHDPQTTSLLYLELGNKPAPNTFYVGIY. The chain crosses the membrane as a helical span at residues 64–84; sequence ILIAVGAVMMFVGFLGCYGAI. The Cytoplasmic segment spans residues 85-89; that stretch reads QESQC. A helical membrane pass occupies residues 90–112; it reads LLGTFFTCLVILFACEVAAGIWG. The Extracellular segment spans residues 113 to 201; that stretch reads FVNKDQIAKD…QKIDELFSGK (89 aa). 2 disulfides stabilise this stretch: C156/C190 and C157/C175. A helical membrane pass occupies residues 202-224; that stretch reads LYLIGIAAIVVAVIMIFEMILSM. Residue E219 coordinates cholesterol. Topologically, residues 225-236 are cytoplasmic; sequence VLCCGIRNSSVY.

Belongs to the tetraspanin (TM4SF) family. In terms of assembly, homodimer. Part of a complex composed of CD19, CR2/CD21, CD81 and IFITM1/CD225 in the membrane of mature B cells. Interacts (via the second extracellular domain) with CD19; this interaction is initiated early during biosynthesis in the ER and enables trafficking of only properly folded CD19. Part of a complex that includes MHC class II/HLA-DR molecules and IFITM1. Interacts with IFITM1. Interacts with IFITM2 and IFITM3. Part of integrin-tetraspanin complex composed of CD9, CD81, beta-1 and beta-2 integrins in the membrane of monocyte/macrophages. Interacts (via the second extracellular domain) with integrin ITGAV:ITGB3. Interacts with CD247/CD3 zeta, ICAM1 and CD9 at the immune synapse on T cell membrane. Part of a GPCR-tetraspanin complex consisting at least of ADGRG1, CD81, possibly CD9, and GNA11 in which CD81 enhances the association of ADGRG1 with GNA11. Part of a complex composed of CD9, CD81, PTGFRN and IGSF8. Interacts directly with IGSF8. Interacts with CD53 and SCIMP. Interacts with SAMHD1 (via its C-terminus). Interacts with glypican GPC3 and with the transcriptional repressor HHEX; binding to GPC3 decreases the availability of free CD81 for binding to HHEX, resulting in nuclear translocation of HHEX and transcriptional repression. Interacts with CLDN1. Interacts with CLDN6 and CLDN9. In terms of processing, not glycosylated. Likely constitutively palmitoylated at low levels. Protein palmitoylation is up-regulated upon coligation of BCR and CD9-C2R-CD81 complexes in lipid rafts. In terms of tissue distribution, expressed in oocytes (at protein level). Highly expressed in granulosa cells. Expressed in skeletal muscle mainly in endothelial cells of endomysial capillaries, in satellite cells and myoblasts (at protein level). Expressed in hepatocytes (at protein level).

Its subcellular location is the cell membrane. The protein localises to the basolateral cell membrane. In terms of biological role, structural component of specialized membrane microdomains known as tetraspanin-enriched microdomains (TERMs), which act as platforms for receptor clustering and signaling. Essential for trafficking and compartmentalization of CD19 receptor on the cell surface of activated B cells. Upon initial encounter with a microbial pathogen, enables the assembly of CD19-CR2 and B cell receptor complexes at signaling TERMs, lowering the threshold dose of antigen required to trigger B cell clonal expansion and humoral immune response. In T cells, associates with CD4 or CD8 coreceptors and defines the maturation state of antigen-induced synapses with B cells. Facilitates localization of CD3 in these immune synapses, required for costimulation and sustained activation of T cells, preferentially triggering T helper type 2 immune response. Can act both as positive and negative regulator of homotypic or heterotypic cell-cell fusion processes. In myoblasts, associates with another tetraspanin CD9 in complex with PTGFRN and inhibits myotube fusion during muscle regeneration. In macrophages, associates with CD9 and beta-1 and beta-2 integrins, and prevents macrophage fusion into multinucleated giant cells specialized in ingesting complement-opsonized large particles. Also prevents the fusion between mononuclear cell progenitors into osteoclasts in charge of bone resorption. Positively regulates sperm-egg fusion and may be involved in the acrosome reaction. Regulates protein trafficking in intracellular compartments. In T cells, associates with dNTPase SAMHD1 and defines its subcellular location, enabling its degradation by the proteasome and thereby controlling intracellular dNTP levels. Also regulates integrin-dependent migration of macrophages, particularly relevant for inflammatory response in the lung. Functionally, (Microbial infection) Specifically required for Plasmodium yoelii infectivity of hepatocytes, controlling sporozoite entry in hepatocytes via the parasitophorous vacuole and subsequent parasite differentiation to exoerythrocytic forms. This chain is CD81 antigen, found in Mus musculus (Mouse).